A 1491-amino-acid chain; its full sequence is Neurexin-1a (1491 aa).

The first 27 residues, 1 to 27, serve as a signal peptide directing secretion; sequence MSFSMRNGAHLIWIGLLVCCLVDMGAS. One can recognise a Laminin G-like 1 domain in the interval 28-208; sequence MEFTGAEGQW…SDICEADHIC (181 aa). Over 28 to 1415 the chain is Extracellular; sequence MEFTGAEGQW…EVIRESSSTT (1388 aa). The 39-residue stretch at 198 to 236 folds into the EGF-like 1 domain; sequence NSDICEADHICLNGGVCSIVNDEPICDCSETGFQGKDCS. 3 disulfide bridges follow: Cys202/Cys214, Cys208/Cys223, and Cys225/Cys235. Laminin G-like domains follow at residues 263–460 and 467–661; these read MATF…AFKC and DPVT…KPSC. Ca(2+) contacts are provided by Asp309, Leu326, and Met394. Intrachain disulfides connect Cys424–Cys460, Cys632–Cys661, Cys669–Cys680, Cys674–Cys689, and Cys691–Cys701. The EGF-like 2 domain maps to 665 to 702; it reads PPKQCLSNPCLNSGTCREGWNRYVCDCSGTGYLGRSCE. 2 consecutive Laminin G-like domains span residues 707-880 and 894-1069; these read ILSY…IDYC and DPVT…ERGC. Disulfide bonds link Cys1041–Cys1069, Cys1076–Cys1087, Cys1081–Cys1096, and Cys1098–Cys1108. Positions 1072 to 1109 constitute an EGF-like 3 domain; the sequence is PSTTCQEDSCSNQGVCLQQWEGFSCDCSMTSYGGPLCN. One can recognise a Laminin G-like 6 domain in the interval 1113–1314; that stretch reads TTYIFGRDGG…DPNVRVEGSA (202 aa). Residues 1318 to 1408 form a disordered region; sequence GDMPSSSITP…AKGYPSPEVI (91 aa). Positions 1322-1353 are enriched in low complexity; it reads SSSITPQSSVSAAGNRSETSPSITDITTTTAS. Residues 1354–1364 show a composition bias toward polar residues; it reads NRQGKQTTTPQ. A helical transmembrane segment spans residues 1416–1436; sequence GMVVGIVAAAALCILILLYAM. The Cytoplasmic segment spans residues 1437 to 1491; the sequence is YKYRNRDEGSYHVDESRNYISNSATQPNGAAVKEKPIGVPKNKKDKKNKDKEYYV. Residues 1457-1491 are disordered; it reads SNSATQPNGAAVKEKPIGVPKNKKDKKNKDKEYYV.

The protein belongs to the neurexin family.

It localises to the membrane. Neuronal cell surface protein that may be involved in cell recognition and cell adhesion. The sequence is that of Neurexin-1a (nrxn1a) from Danio rerio (Zebrafish).